A 175-amino-acid polypeptide reads, in one-letter code: Large ribosomal subunit protein uL10 (175 aa).

This sequence belongs to the universal ribosomal protein uL10 family. In terms of assembly, part of the ribosomal stalk of the 50S ribosomal subunit. The N-terminus interacts with L11 and the large rRNA to form the base of the stalk. The C-terminus forms an elongated spine to which L12 dimers bind in a sequential fashion forming a multimeric L10(L12)X complex.

Forms part of the ribosomal stalk, playing a central role in the interaction of the ribosome with GTP-bound translation factors. The protein is Large ribosomal subunit protein uL10 of Mycobacterium sp. (strain JLS).